The sequence spans 56 residues: Small ribosomal subunit protein bS21 (56 aa).

Belongs to the bacterial ribosomal protein bS21 family.

The polypeptide is Small ribosomal subunit protein bS21 (Synechococcus sp. (strain WH7803)).